The chain runs to 85 residues: uncharacterized protein (85 aa).

Transmembrane regions (helical) follow at residues 14-34 (FLFG…RATI) and 60-80 (IFVY…IYFL).

The protein localises to the cell membrane. This is an uncharacterized protein from Escherichia coli O157:H7.